Here is a 339-residue protein sequence, read N- to C-terminus: Phosphate acyltransferase (339 aa).

Belongs to the PlsX family. As to quaternary structure, homodimer. Probably interacts with PlsY.

It localises to the cytoplasm. The enzyme catalyses a fatty acyl-[ACP] + phosphate = an acyl phosphate + holo-[ACP]. Its pathway is lipid metabolism; phospholipid metabolism. Its function is as follows. Catalyzes the reversible formation of acyl-phosphate (acyl-PO(4)) from acyl-[acyl-carrier-protein] (acyl-ACP). This enzyme utilizes acyl-ACP as fatty acyl donor, but not acyl-CoA. The polypeptide is Phosphate acyltransferase (Aeromonas salmonicida (strain A449)).